The sequence spans 136 residues: Peptide methionine sulfoxide reductase MsrB (136 aa).

Positions 9 to 136 (DAEWKALLAE…NSASLDFKKK (128 aa)) constitute a MsrB domain. Zn(2+)-binding residues include Cys53, Cys56, Cys102, and Cys105. Residue Cys125 is the Nucleophile of the active site.

Belongs to the MsrB Met sulfoxide reductase family. The cofactor is Zn(2+).

It carries out the reaction L-methionyl-[protein] + [thioredoxin]-disulfide + H2O = L-methionyl-(R)-S-oxide-[protein] + [thioredoxin]-dithiol. In Variovorax paradoxus (strain S110), this protein is Peptide methionine sulfoxide reductase MsrB.